A 352-amino-acid chain; its full sequence is MDYQVSSPTYDIDYYTSEPCQKINVKQIAARLLPPLYSLVFIFGFVGNILVVLILINCKRLKSMTDIYLLNLAISDLLFLLTVPFWAHYAAAQWDFGNTMCQLLTGLYFIGFFSGIFFIILLTIDRYLAIVHAVFALKARTVTFGVVTSVITWVVAVFASLPRIIFTRSQREGLHYTCSSHFPYSQYQFWKNFQTLKIVILGLVLPLLVMVICYSGILKTLLRCRNEKKRHRAVRLIFTIMIVYFLFWAPYNIVLLLNTFQEFFGLNNCSSSNRLDQAMQVTETLGMTHCCINPIIYAFVGEKFRNYLLVFFQKHIAKRFCKCCSIFQQEAPERASSVYTRSTGEQETSVGL.

Over 1-30 (MDYQVSSPTYDIDYYTSEPCQKINVKQIAA) the chain is Extracellular. Tyr3 carries the post-translational modification Sulfotyrosine. Ser6 and Ser7 each carry an O-linked (GalNAc...) serine glycan. A sulfotyrosine mark is found at Tyr10, Tyr14, and Tyr15. Disulfide bonds link Cys20–Cys269 and Cys101–Cys178. The chain crosses the membrane as a helical span at residues 31–58 (RLLPPLYSLVFIFGFVGNILVVLILINC). Residues 59–68 (KRLKSMTDIY) lie on the Cytoplasmic side of the membrane. The chain crosses the membrane as a helical span at residues 69–89 (LLNLAISDLLFLLTVPFWAHY). Residues 90-102 (AAAQWDFGNTMCQ) lie on the Extracellular side of the membrane. The helical transmembrane segment at 103–124 (LLTGLYFIGFFSGIFFIILLTI) threads the bilayer. At 125–141 (DRYLAIVHAVFALKART) the chain is on the cytoplasmic side. Residues 142 to 166 (VTFGVVTSVITWVVAVFASLPRIIF) traverse the membrane as a helical segment. Residues 167–198 (TRSQREGLHYTCSSHFPYSQYQFWKNFQTLKI) lie on the Extracellular side of the membrane. Residues 199 to 218 (VILGLVLPLLVMVICYSGIL) traverse the membrane as a helical segment. The Cytoplasmic portion of the chain corresponds to 219 to 235 (KTLLRCRNEKKRHRAVR). Residues 236-260 (LIFTIMIVYFLFWAPYNIVLLLNTF) form a helical membrane-spanning segment. Over 261–277 (QEFFGLNNCSSSNRLDQ) the chain is Extracellular. A helical transmembrane segment spans residues 278 to 301 (AMQVTETLGMTHCCINPIIYAFVG). Topologically, residues 302–352 (EKFRNYLLVFFQKHIAKRFCKCCSIFQQEAPERASSVYTRSTGEQETSVGL) are cytoplasmic. Residues Cys321, Cys323, and Cys324 are each lipidated (S-palmitoyl cysteine). Phosphoserine; by BARK1 occurs at positions 336, 337, 342, and 349.

The protein belongs to the G-protein coupled receptor 1 family. Interacts with PRAF2. Efficient ligand binding to CCL3/MIP-1alpha and CCL4/MIP-1beta requires sulfation, O-glycosylation and sialic acid modifications. Glycosylation on Ser-6 is required for efficient binding of CCL4. Interacts with GRK2. Interacts with ARRB1 and ARRB2. Interacts with CNIH4. Interacts with S100A4; this interaction stimulates T-lymphocyte chemotaxis. In terms of processing, sulfated on at least 2 of the N-terminal tyrosines. Sulfation is required for efficient binding of the chemokines, CCL3 and CCL4. Palmitoylation in the C-terminal is important for cell surface expression. Post-translationally, phosphorylation on serine residues in the C-terminal is stimulated by binding CC chemokines especially by APO-RANTES. In terms of processing, O-glycosylated, but not N-glycosylated. Ser-6 appears to be the major site even if Ser-7 may be also O-glycosylated. Also sialylated glycans present which contribute to chemokine binding. Thr-16 and Ser-17 may also be glycosylated and, if so, with small moieties such as a T-antigen.

The protein resides in the cell membrane. Receptor for a number of inflammatory CC-chemokines including CCL3/MIP-1-alpha, CCL4/MIP-1-beta and RANTES and subsequently transduces a signal by increasing the intracellular calcium ion level. May play a role in the control of granulocytic lineage proliferation or differentiation. Participates in T-lymphocyte migration to the infection site by acting as a chemotactic receptor. This is C-C chemokine receptor type 5 (CCR5) from Chlorocebus tantalus (Tantalus monkey).